The sequence spans 146 residues: Hemoglobin subunit beta (146 aa).

Positions 2–146 constitute a Globin domain; that stretch reads HWSAEEKQLI…VAHALARKYH (145 aa). Residues H63 and H92 each contribute to the heme b site.

It belongs to the globin family. In terms of assembly, heterotetramer of two alpha chains and two beta chains. Red blood cells.

Functionally, involved in oxygen transport from the lung to the various peripheral tissues. This chain is Hemoglobin subunit beta (HBB), found in Phoenicopterus ruber (American flamingo).